The sequence spans 767 residues: Polyribonucleotide nucleotidyltransferase (767 aa).

Mg(2+) contacts are provided by aspartate 488 and aspartate 494. The 60-residue stretch at 555-614 (PRLYTMKINPEKIRDVIGKGGSVIRALTEETGCQIDIGEDGTITIASTDADKAELAKKRI) folds into the KH domain. The S1 motif domain maps to 624–692 (GKVYEGPVVK…EKGRIKLSMK (69 aa)). Residues 700-742 (GMEFEERAPRREGGFGDRGDRGDRGPRRDRGGDRPERGERPAR) are compositionally biased toward basic and acidic residues. The disordered stretch occupies residues 700 to 767 (GMEFEERAPR…QPQQQQGQQQ (68 aa)). Over residues 752 to 767 (GAPAAGQPQQQQGQQQ) the composition is skewed to low complexity.

Belongs to the polyribonucleotide nucleotidyltransferase family. The cofactor is Mg(2+).

The protein localises to the cytoplasm. The catalysed reaction is RNA(n+1) + phosphate = RNA(n) + a ribonucleoside 5'-diphosphate. In terms of biological role, involved in mRNA degradation. Catalyzes the phosphorolysis of single-stranded polyribonucleotides processively in the 3'- to 5'-direction. The polypeptide is Polyribonucleotide nucleotidyltransferase (Leptothrix cholodnii (strain ATCC 51168 / LMG 8142 / SP-6) (Leptothrix discophora (strain SP-6))).